Reading from the N-terminus, the 275-residue chain is Putative phosphoenolpyruvate synthase regulatory protein (275 aa).

157-164 (GVSRCGKT) contacts ADP.

This sequence belongs to the pyruvate, phosphate/water dikinase regulatory protein family. PSRP subfamily.

The enzyme catalyses [pyruvate, water dikinase] + ADP = [pyruvate, water dikinase]-phosphate + AMP + H(+). The catalysed reaction is [pyruvate, water dikinase]-phosphate + phosphate + H(+) = [pyruvate, water dikinase] + diphosphate. Functionally, bifunctional serine/threonine kinase and phosphorylase involved in the regulation of the phosphoenolpyruvate synthase (PEPS) by catalyzing its phosphorylation/dephosphorylation. The chain is Putative phosphoenolpyruvate synthase regulatory protein from Bordetella bronchiseptica (strain ATCC BAA-588 / NCTC 13252 / RB50) (Alcaligenes bronchisepticus).